The primary structure comprises 159 residues: uncharacterized protein (159 aa).

This is an uncharacterized protein from Bacillus subtilis (strain 168).